Reading from the N-terminus, the 262-residue chain is MSERESWHKEIDLFFVAMGYFTRIPMPKWVEVDADKLNKASRYFGLVGLLVGLLSAIIFWLTQNWLPAGVSVLLSMLTGILLTGGFHEDGLADTFDGFGGGWTAEDKLRIMKDSRLGSYGALALIMVLLLKWQLLVELALYDPVVAGSAMIVAHTVSRVVAASLIFTETYVRDDETSKSKPLAQHQGINDLFILIASGVLVLLVLKGIAALSLLLVMIGLRRLIVVIFRRQIGGYTGDTLGAAQQICEIVCYFVLLVVGGIL.

Transmembrane regions (helical) follow at residues Tyr-43–Gln-63, Leu-66–Phe-86, Gly-120–Leu-140, Ala-146–Phe-166, Leu-191–Leu-211, and Ala-242–Leu-262.

The protein belongs to the CobS family. Mg(2+) is required as a cofactor.

The protein resides in the cell inner membrane. The catalysed reaction is alpha-ribazole + adenosylcob(III)inamide-GDP = adenosylcob(III)alamin + GMP + H(+). It carries out the reaction alpha-ribazole 5'-phosphate + adenosylcob(III)inamide-GDP = adenosylcob(III)alamin 5'-phosphate + GMP + H(+). It participates in cofactor biosynthesis; adenosylcobalamin biosynthesis; adenosylcobalamin from cob(II)yrinate a,c-diamide: step 7/7. In terms of biological role, joins adenosylcobinamide-GDP and alpha-ribazole to generate adenosylcobalamin (Ado-cobalamin). Also synthesizes adenosylcobalamin 5'-phosphate from adenosylcobinamide-GDP and alpha-ribazole 5'-phosphate. This Shewanella oneidensis (strain ATCC 700550 / JCM 31522 / CIP 106686 / LMG 19005 / NCIMB 14063 / MR-1) protein is Adenosylcobinamide-GDP ribazoletransferase.